Here is a 256-residue protein sequence, read N- to C-terminus: Trans-aconitate 2-methyltransferase (256 aa).

This sequence belongs to the methyltransferase superfamily. Tam family.

It is found in the cytoplasm. It carries out the reaction trans-aconitate + S-adenosyl-L-methionine = (E)-3-(methoxycarbonyl)pent-2-enedioate + S-adenosyl-L-homocysteine. In terms of biological role, catalyzes the S-adenosylmethionine monomethyl esterification of trans-aconitate. This is Trans-aconitate 2-methyltransferase from Afipia carboxidovorans (strain ATCC 49405 / DSM 1227 / KCTC 32145 / OM5) (Oligotropha carboxidovorans).